The chain runs to 374 residues: UPF0496 protein At4g34320 (374 aa).

2 consecutive transmembrane segments (helical) span residues 215–235 (IIFVATFATVLICSVVAAAMA) and 238–258 (PVAAALAAATAVPLGSMGKWI).

This sequence belongs to the UPF0496 family.

It is found in the membrane. In Arabidopsis thaliana (Mouse-ear cress), this protein is UPF0496 protein At4g34320.